A 66-amino-acid chain; its full sequence is Large ribosomal subunit protein eL24 (66 aa).

Zn(2+) is bound by residues Cys7, Cys10, Cys33, and Cys37. Residues 7 to 37 (CSYCGKPFEPGTGKMYVRNDGRVLFFCSRKC) form a C4-type zinc finger.

The protein belongs to the eukaryotic ribosomal protein eL24 family. As to quaternary structure, part of the 50S ribosomal subunit. Forms a cluster with proteins L3 and L14. Requires Zn(2+) as cofactor.

Its function is as follows. Binds to the 23S rRNA. This chain is Large ribosomal subunit protein eL24, found in Pyrococcus furiosus (strain ATCC 43587 / DSM 3638 / JCM 8422 / Vc1).